A 129-amino-acid chain; its full sequence is MPRLLGVEIPAKKKVAYSLRYINGIGPTRADLLVKEAGLSPDMRAQDLTEEQLNKILHLITEHKWVLEGDLRREIAGNLKRLQAINCYRGVRHRRGLPVRGQRTSTNARTRKGPRKTVGVSKAAAAAKA.

The tract at residues 96 to 129 (GLPVRGQRTSTNARTRKGPRKTVGVSKAAAAAKA) is disordered.

This sequence belongs to the universal ribosomal protein uS13 family. Part of the 30S ribosomal subunit. Forms a loose heterodimer with protein S19. Forms two bridges to the 50S subunit in the 70S ribosome.

In terms of biological role, located at the top of the head of the 30S subunit, it contacts several helices of the 16S rRNA. In the 70S ribosome it contacts the 23S rRNA (bridge B1a) and protein L5 of the 50S subunit (bridge B1b), connecting the 2 subunits; these bridges are implicated in subunit movement. Contacts the tRNAs in the A and P-sites. In Opitutus terrae (strain DSM 11246 / JCM 15787 / PB90-1), this protein is Small ribosomal subunit protein uS13.